We begin with the raw amino-acid sequence, 467 residues long: tRNA-2-methylthio-N(6)-dimethylallyladenosine synthase (467 aa).

An MTTase N-terminal domain is found at 5–125 (RKLHIKSYGC…LPQLLAQASR (121 aa)). 6 residues coordinate [4Fe-4S] cluster: C14, C50, C88, C166, C170, and C173. The Radical SAM core domain occupies 152–384 (RARGVSAFVT…QSLIDSQQAA (233 aa)). Residues 387-449 (KAAIGSVVDV…RYSLLGELVA (63 aa)) form the TRAM domain.

Belongs to the methylthiotransferase family. MiaB subfamily. As to quaternary structure, monomer. The cofactor is [4Fe-4S] cluster.

Its subcellular location is the cytoplasm. The catalysed reaction is N(6)-dimethylallyladenosine(37) in tRNA + (sulfur carrier)-SH + AH2 + 2 S-adenosyl-L-methionine = 2-methylsulfanyl-N(6)-dimethylallyladenosine(37) in tRNA + (sulfur carrier)-H + 5'-deoxyadenosine + L-methionine + A + S-adenosyl-L-homocysteine + 2 H(+). Its function is as follows. Catalyzes the methylthiolation of N6-(dimethylallyl)adenosine (i(6)A), leading to the formation of 2-methylthio-N6-(dimethylallyl)adenosine (ms(2)i(6)A) at position 37 in tRNAs that read codons beginning with uridine. The sequence is that of tRNA-2-methylthio-N(6)-dimethylallyladenosine synthase from Bradyrhizobium sp. (strain ORS 278).